An 84-amino-acid polypeptide reads, in one-letter code: Sporulation-specific transcription factor SpoVIF (84 aa).

The protein resides in the cytoplasm. Functionally, transcription factor involved in spore coat assembly and spore resistance. Required for gene regulation during the latter stages of sporulation. Regulates the transcription of at least cgeA, cotG and cotS. May directly or indirectly control the function of the GerE protein. In Bacillus subtilis (strain 168), this protein is Sporulation-specific transcription factor SpoVIF.